A 217-amino-acid chain; its full sequence is Oxygen-insensitive NAD(P)H nitroreductase (217 aa).

10–14 (RHSTK) serves as a coordination point for FMN. Lysine 14, threonine 41, threonine 67, asparagine 71, lysine 74, and arginine 107 together coordinate NAD(+). Asparagine 71 is an FMN binding site. FMN is bound by residues 165 to 166 (EG) and 205 to 207 (KSR).

This sequence belongs to the nitroreductase family. Homodimer. FMN serves as cofactor.

Functionally, reduction of a variety of nitroaromatic compounds using NADH (and to lesser extent NADPH) as source of reducing equivalents; two electrons are transferred. This is Oxygen-insensitive NAD(P)H nitroreductase from Enterobacter cloacae.